A 313-amino-acid polypeptide reads, in one-letter code: Porphobilinogen deaminase (313 aa).

An S-(dipyrrolylmethanemethyl)cysteine modification is found at C243.

The protein belongs to the HMBS family. In terms of assembly, monomer. Dipyrromethane is required as a cofactor.

The catalysed reaction is 4 porphobilinogen + H2O = hydroxymethylbilane + 4 NH4(+). The protein operates within porphyrin-containing compound metabolism; protoporphyrin-IX biosynthesis; coproporphyrinogen-III from 5-aminolevulinate: step 2/4. Functionally, tetrapolymerization of the monopyrrole PBG into the hydroxymethylbilane pre-uroporphyrinogen in several discrete steps. The chain is Porphobilinogen deaminase from Bordetella petrii (strain ATCC BAA-461 / DSM 12804 / CCUG 43448).